A 260-amino-acid chain; its full sequence is Global transcriptional regulator CodY (260 aa).

Residues 1-159 (MPNLLEKTRK…SSTVVGIQLL (159 aa)) form a GAF domain region. The H-T-H motif DNA-binding region spans 207–226 (ASVIADRIGITRSVIVNALR).

Belongs to the CodY family.

The protein localises to the cytoplasm. DNA-binding global transcriptional regulator which is involved in the adaptive response to starvation and acts by directly or indirectly controlling the expression of numerous genes in response to nutrient availability. During rapid exponential growth, CodY is highly active and represses genes whose products allow adaptation to nutrient depletion. The protein is Global transcriptional regulator CodY of Streptococcus equi subsp. equi (strain 4047).